The sequence spans 538 residues: Dolichol kinase (538 aa).

At 1 to 18 (MTRECAPPTPGSGAPLSG) the chain is on the lumenal side. A helical membrane pass occupies residues 19–39 (SVLAEAAVVFVVVLSIHAAVW). Residues 40–74 (DRYSWCAVALAVQAFYVQYKWDRLLQQGSAVFQFR) lie on the Cytoplasmic side of the membrane. The chain crosses the membrane as a helical span at residues 75-95 (MSANSGLLPASVVMPLLGLVM). Residues 96-111 (KERCQAAGNPYFERFG) lie on the Lumenal side of the membrane. Residues 112–132 (IVVAATGMAVALFSSVLALGI) traverse the membrane as a helical segment. At 133–134 (TR) the chain is on the cytoplasmic side. Residues 135-155 (PVPTNTCVISGLAGGVIIYIM) traverse the membrane as a helical segment. The Lumenal portion of the chain corresponds to 156–163 (KHSLSVGE). The helical transmembrane segment at 164 to 184 (VIEVLEALLIFVYLNMILLYL) threads the bilayer. Residues 185–188 (LPRC) are Cytoplasmic-facing. Residues 189 to 209 (FTPGEALLVLGGISFMLNQLI) form a helical membrane-spanning segment. Residues 210–224 (KRSLTVVESQGDPLD) lie on the Lumenal side of the membrane. Residues 225–245 (FFLLVVVVGMVLMGIFFSTLF) traverse the membrane as a helical segment. Over 246–254 (VFMDSGTWA) the chain is Cytoplasmic. A helical transmembrane segment spans residues 255-275 (SSIFFHLMTCVLGLGVVLPWL). Residues 276–297 (HRLIRRNPLLWLFQFLFQTETR) lie on the Lumenal side of the membrane. A helical transmembrane segment spans residues 298–318 (VYLLAYWCLLATVACLVVLYQ). The Cytoplasmic portion of the chain corresponds to 319–337 (NAKRSSSESKKHQAPTITR). A helical membrane pass occupies residues 338-354 (KYFHFIVVATYIPGIIL). The Lumenal portion of the chain corresponds to 355 to 359 (DRPLL). Residues 360 to 380 (YVAATVCLAVFIFLEYVRYFR) form a helical membrane-spanning segment. The Cytoplasmic portion of the chain corresponds to 381 to 401 (IKPLGHTLRSLLSLFLDERDS). A helical transmembrane segment spans residues 402 to 422 (GPLILTHIYLLLGMSLPIWLV). Residues 423–436 (PRPCTQKGSLGGAR) lie on the Lumenal side of the membrane. A helical transmembrane segment spans residues 437 to 457 (ALVPYAGVLAVGVGDTVASIF). The Cytoplasmic portion of the chain corresponds to 458–472 (GSTMGEIRWPGTKKT). A CTP-binding region spans residues 459–474 (STMGEIRWPGTKKTFE). The chain crosses the membrane as a helical span at residues 473-493 (FEGTMTSIFAQIISVALILIF). The Lumenal segment spans residues 494 to 495 (DS). A helical transmembrane segment spans residues 496–516 (GVDLNYSYAWILGSISTVSLL). Residues 517–538 (EAYTTQIDNLLLPLYLLILLMA) lie on the Cytoplasmic side of the membrane.

The protein belongs to the polyprenol kinase family.

Its subcellular location is the endoplasmic reticulum membrane. The catalysed reaction is a di-trans,poly-cis-dolichol + CTP = a di-trans,poly-cis-dolichyl phosphate + CDP + H(+). It participates in protein modification; protein glycosylation. Functionally, catalyzes CTP-mediated phosphorylation of dolichol, the terminal step in de novo dolichyl monophosphate (Dol-P) biosynthesis. Dol-P is a lipid carrier essential for the synthesis of N-linked and O-linked oligosaccharides and for GPI anchors. The protein is Dolichol kinase (DOLK) of Bos taurus (Bovine).